Here is an 83-residue protein sequence, read N- to C-terminus: Cytochrome b559 subunit alpha (83 aa).

A helical membrane pass occupies residues 21–35 (VIHSITIPSLFIAGW). His23 is a binding site for heme.

This sequence belongs to the PsbE/PsbF family. As to quaternary structure, heterodimer of an alpha subunit and a beta subunit. PSII is composed of 1 copy each of membrane proteins PsbA, PsbB, PsbC, PsbD, PsbE, PsbF, PsbH, PsbI, PsbJ, PsbK, PsbL, PsbM, PsbT, PsbX, PsbY, PsbZ, Psb30/Ycf12, at least 3 peripheral proteins of the oxygen-evolving complex and a large number of cofactors. It forms dimeric complexes. Requires heme b as cofactor.

It localises to the plastid. It is found in the chloroplast thylakoid membrane. Its function is as follows. This b-type cytochrome is tightly associated with the reaction center of photosystem II (PSII). PSII is a light-driven water:plastoquinone oxidoreductase that uses light energy to abstract electrons from H(2)O, generating O(2) and a proton gradient subsequently used for ATP formation. It consists of a core antenna complex that captures photons, and an electron transfer chain that converts photonic excitation into a charge separation. In Huperzia lucidula (Shining clubmoss), this protein is Cytochrome b559 subunit alpha.